Here is a 424-residue protein sequence, read N- to C-terminus: Enolase (424 aa).

Gln-162 lines the (2R)-2-phosphoglycerate pocket. Residue Glu-204 is the Proton donor of the active site. Residues Asp-241, Glu-284, and Asp-311 each coordinate Mg(2+). Residues Lys-336, Arg-365, Ser-366, and Lys-387 each contribute to the (2R)-2-phosphoglycerate site. Residue Lys-336 is the Proton acceptor of the active site.

Belongs to the enolase family. Mg(2+) is required as a cofactor.

The protein localises to the cytoplasm. Its subcellular location is the secreted. It is found in the cell surface. The catalysed reaction is (2R)-2-phosphoglycerate = phosphoenolpyruvate + H2O. Its pathway is carbohydrate degradation; glycolysis; pyruvate from D-glyceraldehyde 3-phosphate: step 4/5. Catalyzes the reversible conversion of 2-phosphoglycerate (2-PG) into phosphoenolpyruvate (PEP). It is essential for the degradation of carbohydrates via glycolysis. The sequence is that of Enolase from Sinorhizobium medicae (strain WSM419) (Ensifer medicae).